A 1234-amino-acid polypeptide reads, in one-letter code: 1-phosphatidylinositol 4,5-bisphosphate phosphodiesterase beta-3 (1234 aa).

The residue at position 2 (Ala-2) is an N-acetylalanine. Positions 315–466 (MDMTQPLSAY…LMGRILVKNK (152 aa)) constitute a PI-PLC X-box domain. Active-site residues include His-330 and His-377. Residues 465–586 (NKKRHRPSTG…GTASSEVNAT (122 aa)) are disordered. A phosphoserine mark is found at Ser-472, Ser-488, Ser-493, and Ser-535. Positions 486–513 (EQSNSALSESSAATEPSSPQLGSPSSDS) are enriched in low complexity. Over residues 554-566 (REDEEEDEEEEET) the composition is skewed to acidic residues. Positions 577–586 (GTASSEVNAT) are enriched in polar residues. Positions 589–705 (MSTLVNYVEP…GYLLKPEFMR (117 aa)) constitute a PI-PLC Y-box domain. The C2 domain maps to 706–834 (RPDKSFDPFT…RNEANQPLCL (129 aa)). A compositionally biased stretch (polar residues) spans 886–907 (ASTEMCQETPSQQQGSQLSSNP). Residues 886-936 (ASTEMCQETPSQQQGSQLSSNPVPNPLDDSPRWPPGPTTSPTSTSLSSPGQ) are disordered. Low complexity predominate over residues 924–934 (TSPTSTSLSSP). A phosphoserine mark is found at Ser-925 and Ser-1105. A disordered region spans residues 1196 to 1234 (SEGLGDGPLVACASNGHAAGSGGHQSGADSESQEENTQL). An interaction with SHANK2 region spans residues 1231 to 1234 (NTQL).

As to quaternary structure, interacts with LPAR2. Interacts with SHANK2. Requires Ca(2+) as cofactor. As to expression, expressed in parotid gland, brain, liver, uterus, lung, heart, adrenal gland, and ovary. Not detected in spleen, pancreas, intestine, thymus or kidney.

The protein localises to the cytoplasm. It is found in the membrane. The protein resides in the nucleus. It catalyses the reaction a 1,2-diacyl-sn-glycero-3-phospho-(1D-myo-inositol-4,5-bisphosphate) + H2O = 1D-myo-inositol 1,4,5-trisphosphate + a 1,2-diacyl-sn-glycerol + H(+). It carries out the reaction a 1,2-diacyl-sn-glycero-3-phospho-(1D-myo-inositol) + H2O = 1D-myo-inositol 1-phosphate + a 1,2-diacyl-sn-glycerol + H(+). Its activity is regulated as follows. Activated by G(q)/G(11) G alpha proteins in response to ligand-binding to G protein-coupled receptors. Functionally, catalyzes the production of the second messenger molecules diacylglycerol (DAG) and inositol 1,4,5-trisphosphate (IP3). Key transducer of G protein-coupled receptor signaling: activated by G(q)/G(11) G alpha proteins downstream of G protein-coupled receptors activation. In neutrophils, participates in a phospholipase C-activating N-formyl peptide-activated GPCR (G protein-coupled receptor) signaling pathway by promoting RASGRP4 activation by DAG, to promote neutrophil functional responses. This is 1-phosphatidylinositol 4,5-bisphosphate phosphodiesterase beta-3 from Rattus norvegicus (Rat).